Consider the following 472-residue polypeptide: Exodeoxyribonuclease 7 large subunit (472 aa).

This sequence belongs to the XseA family. Heterooligomer composed of large and small subunits.

It is found in the cytoplasm. The catalysed reaction is Exonucleolytic cleavage in either 5'- to 3'- or 3'- to 5'-direction to yield nucleoside 5'-phosphates.. In terms of biological role, bidirectionally degrades single-stranded DNA into large acid-insoluble oligonucleotides, which are then degraded further into small acid-soluble oligonucleotides. This is Exodeoxyribonuclease 7 large subunit from Carboxydothermus hydrogenoformans (strain ATCC BAA-161 / DSM 6008 / Z-2901).